The following is a 444-amino-acid chain: Trigger factor (444 aa).

The PPIase FKBP-type domain maps to 161–246 (GDRVVIDFKG…VQKVEGQKLP (86 aa)).

The protein belongs to the FKBP-type PPIase family. Tig subfamily.

It localises to the cytoplasm. It carries out the reaction [protein]-peptidylproline (omega=180) = [protein]-peptidylproline (omega=0). Involved in protein export. Acts as a chaperone by maintaining the newly synthesized protein in an open conformation. Functions as a peptidyl-prolyl cis-trans isomerase. This is Trigger factor from Saccharophagus degradans (strain 2-40 / ATCC 43961 / DSM 17024).